Here is a 464-residue protein sequence, read N- to C-terminus: Serine/threonine-protein kinase 38-like (464 aa).

Ala-2 is modified (N-acetylalanine). An S100B binding region spans residues 63–88 (KKLRRSQHARKETEFLRLKRTRLGLD). Thr-75 is subject to Phosphothreonine. The Protein kinase domain maps to 90–383 (FESLKVIGRG…VEEIKGHPFF (294 aa)). ATP contacts are provided by residues 96–104 (IGRGAFGEV) and Lys-119. Asp-213 acts as the Proton acceptor in catalysis. At Ser-282 the chain carries Phosphoserine; by autocatalysis. One can recognise an AGC-kinase C-terminal domain in the interval 384-453 (EGVDWEHIRE…KRFEGLTQRG (70 aa)). Phosphothreonine; by STK24/MST3 is present on Thr-442.

This sequence belongs to the protein kinase superfamily. AGC Ser/Thr protein kinase family. Homodimeric S100B binds two molecules of STK38L. Interacts with MICAL1; leading to inhibit the protein kinase activity by antagonizing activation by MST1/STK4. Interacts with MOB1 and MOB2. It depends on Mg(2+) as a cofactor. As to expression, ubiquitously expressed with highest levels observed in the thymus.

Its subcellular location is the cytoplasm. It is found in the cytoskeleton. It localises to the membrane. The catalysed reaction is L-seryl-[protein] + ATP = O-phospho-L-seryl-[protein] + ADP + H(+). It catalyses the reaction L-threonyl-[protein] + ATP = O-phospho-L-threonyl-[protein] + ADP + H(+). With respect to regulation, activated by binding of S100B which releases autoinhibitory N-lobe interactions, enabling ATP to bind and the autophosphorylation of Ser-282. Thr-442 then undergoes calcium-dependent phosphorylation by STK24/MST3. Interactions between phosphorylated Thr-442 and the N-lobe promote additional structural changes that complete the activation of the kinase. Autoinhibition is also released by the binding of MOB1/MOBKL1A and MOB2/HCCA2 to the N-terminal of STK38L. In terms of biological role, involved in the regulation of structural processes in differentiating and mature neuronal cells. The chain is Serine/threonine-protein kinase 38-like from Homo sapiens (Human).